The chain runs to 545 residues: Acetamidase (545 aa).

Residues lysine 130 and serine 205 each act as charge relay system in the active site. Serine 229 acts as the Acyl-ester intermediate in catalysis.

Belongs to the amidase family.

The catalysed reaction is a monocarboxylic acid amide + H2O = a monocarboxylate + NH4(+). The enzyme catalyses acetamide + H2O = acetate + NH4(+). In terms of biological role, allows acetamide to be used as a sole carbon or nitrogen source. This chain is Acetamidase (amdS), found in Aspergillus oryzae (strain ATCC 42149 / RIB 40) (Yellow koji mold).